The following is a 342-amino-acid chain: MTVRVAINGFGRIGRNVVRALYESGRRAEITVVAINELADAAGMAHLLKYDTSHGRFAWEVRHEREQLFVGDDVIRILHEQTLADLPWRELGVDVVLDCTGVYGNREHGEAHIAAGAKKVLFSHPGSNDLDATVVFGVNQNQLRAEHRIVSNASCTTNCIIPVIKLLDDAYGIESGTVTTIHSAMNDQQVIDAYHPDLRRTRAASQSIIPVDTKLAAGITRIFPQFNDRFEAIAVRVPTINVTAIDLSVTVKKPIKASEVNQLLQKAAQGAFHGIVDYTESPLVSIDFNHDPHSAIVDGTQTRVSGAHLIKTLVWCDNEWGFANRMLDTTLAMAAVGFRLDT.

Residue 12–13 (RI) participates in NAD(+) binding. Substrate-binding positions include 154-156 (SCT), Arg-200, 213-214 (TK), and Arg-236. Cys-155 acts as the Nucleophile in catalysis. Asn-318 serves as a coordination point for NAD(+).

Belongs to the glyceraldehyde-3-phosphate dehydrogenase family. Epd subfamily. In terms of assembly, homotetramer.

The protein resides in the cytoplasm. It catalyses the reaction D-erythrose 4-phosphate + NAD(+) + H2O = 4-phospho-D-erythronate + NADH + 2 H(+). It participates in cofactor biosynthesis; pyridoxine 5'-phosphate biosynthesis; pyridoxine 5'-phosphate from D-erythrose 4-phosphate: step 1/5. Its function is as follows. Catalyzes the NAD-dependent conversion of D-erythrose 4-phosphate to 4-phosphoerythronate. In Salmonella arizonae (strain ATCC BAA-731 / CDC346-86 / RSK2980), this protein is D-erythrose-4-phosphate dehydrogenase.